Consider the following 188-residue polypeptide: Achaete-scute homolog 5 (188 aa).

Residues 80-93 form a basic motif region; the sequence is AFIQKRNERERQRV. A bHLH domain is found at 80–132; the sequence is AFIQKRNERERQRVKCVNEGYARLRGHLPGALTEKRLSKVETLRAAIRYIKYL. The helix-loop-helix motif stretch occupies residues 94-132; that stretch reads KCVNEGYARLRGHLPGALTEKRLSKVETLRAAIRYIKYL. The disordered stretch occupies residues 139–188; that stretch reads TPDGAPPPATSPPPAHTGHSNVPQPSSLVAESSGSPFSSSPFLESEEPSL. The segment covering 142–153 has biased composition (pro residues); that stretch reads GAPPPATSPPPA. Positions 158 to 168 are enriched in polar residues; the sequence is SNVPQPSSLVA. The segment covering 169–181 has biased composition (low complexity); sequence ESSGSPFSSSPFL.

In terms of assembly, interacts with transcription factor TCF3/E12. As to expression, expressed in teeth (at protein level).

It is found in the nucleus. Its function is as follows. Transcription factor. Probably binds E-box motifs 5'-CANNTG-3' in complex with transcription factor TCF3/E12. Negatively modulates transcription of target genes such as CDH1/E-cadherin, perhaps by recruiting the PRC2 repressive complex to regulatory elements. Regulates ameloblast development and tooth germ growth, perhaps acting by positively modulating migration of inner enamel epithelium (IEE) cells. Plays a role in enamel formation. In Mus musculus (Mouse), this protein is Achaete-scute homolog 5.